A 411-amino-acid polypeptide reads, in one-letter code: Argininosuccinate synthase (411 aa).

ATP is bound by residues 13–21 (AYSGGLDTS) and Ala-40. 2 residues coordinate L-citrulline: Tyr-91 and Ser-96. Residue Gly-121 coordinates ATP. L-aspartate is bound by residues Thr-123, Asn-127, and Asp-128. Asn-127 provides a ligand contact to L-citrulline. 5 residues coordinate L-citrulline: Arg-131, Ser-182, Ser-191, Glu-267, and Tyr-279.

It belongs to the argininosuccinate synthase family. Type 1 subfamily. Homotetramer.

It is found in the cytoplasm. It catalyses the reaction L-citrulline + L-aspartate + ATP = 2-(N(omega)-L-arginino)succinate + AMP + diphosphate + H(+). It functions in the pathway amino-acid biosynthesis; L-arginine biosynthesis; L-arginine from L-ornithine and carbamoyl phosphate: step 2/3. The polypeptide is Argininosuccinate synthase (Bartonella tribocorum (strain CIP 105476 / IBS 506)).